Consider the following 150-residue polypeptide: Large ribosomal subunit protein bL9 (150 aa).

This sequence belongs to the bacterial ribosomal protein bL9 family.

Its function is as follows. Binds to the 23S rRNA. The chain is Large ribosomal subunit protein bL9 from Polynucleobacter asymbioticus (strain DSM 18221 / CIP 109841 / QLW-P1DMWA-1) (Polynucleobacter necessarius subsp. asymbioticus).